A 71-amino-acid polypeptide reads, in one-letter code: DNA-directed RNA polymerase subunit omega (71 aa).

Belongs to the RNA polymerase subunit omega family. The RNAP catalytic core consists of 2 alpha, 1 beta, 1 beta' and 1 omega subunit. When a sigma factor is associated with the core the holoenzyme is formed, which can initiate transcription.

The catalysed reaction is RNA(n) + a ribonucleoside 5'-triphosphate = RNA(n+1) + diphosphate. Promotes RNA polymerase assembly. Latches the N- and C-terminal regions of the beta' subunit thereby facilitating its interaction with the beta and alpha subunits. The chain is DNA-directed RNA polymerase subunit omega from Campylobacter curvus (strain 525.92).